The sequence spans 243 residues: Pyridoxine 5'-phosphate synthase (243 aa).

N9 is a 3-amino-2-oxopropyl phosphate binding site. A 1-deoxy-D-xylulose 5-phosphate-binding site is contributed by D11–H12. R20 is a 3-amino-2-oxopropyl phosphate binding site. Residue H45 is the Proton acceptor of the active site. R47 and H52 together coordinate 1-deoxy-D-xylulose 5-phosphate. The active-site Proton acceptor is E72. T102 serves as a coordination point for 1-deoxy-D-xylulose 5-phosphate. Catalysis depends on H193, which acts as the Proton donor. 3-amino-2-oxopropyl phosphate-binding positions include G194 and G215–H216.

The protein belongs to the PNP synthase family. As to quaternary structure, homooctamer; tetramer of dimers.

It is found in the cytoplasm. The enzyme catalyses 3-amino-2-oxopropyl phosphate + 1-deoxy-D-xylulose 5-phosphate = pyridoxine 5'-phosphate + phosphate + 2 H2O + H(+). It participates in cofactor biosynthesis; pyridoxine 5'-phosphate biosynthesis; pyridoxine 5'-phosphate from D-erythrose 4-phosphate: step 5/5. Its function is as follows. Catalyzes the complicated ring closure reaction between the two acyclic compounds 1-deoxy-D-xylulose-5-phosphate (DXP) and 3-amino-2-oxopropyl phosphate (1-amino-acetone-3-phosphate or AAP) to form pyridoxine 5'-phosphate (PNP) and inorganic phosphate. The sequence is that of Pyridoxine 5'-phosphate synthase from Vibrio vulnificus (strain CMCP6).